We begin with the raw amino-acid sequence, 459 residues long: Ribulose bisphosphate carboxylase large chain (459 aa).

Asparagine 98 and threonine 148 together coordinate substrate. The active-site Proton acceptor is the lysine 150. Lysine 152 provides a ligand contact to substrate. 3 residues coordinate Mg(2+): lysine 176, aspartate 178, and glutamate 179. The residue at position 176 (lysine 176) is an N6-carboxylysine. The active-site Proton acceptor is histidine 268. Positions 269, 301, and 353 each coordinate substrate.

Belongs to the RuBisCO large chain family. Type I subfamily. Heterohexadecamer of 8 large chains and 8 small chains. It depends on Mg(2+) as a cofactor.

It is found in the plastid. Its subcellular location is the chloroplast. The catalysed reaction is 2 (2R)-3-phosphoglycerate + 2 H(+) = D-ribulose 1,5-bisphosphate + CO2 + H2O. It catalyses the reaction D-ribulose 1,5-bisphosphate + O2 = 2-phosphoglycolate + (2R)-3-phosphoglycerate + 2 H(+). Its function is as follows. RuBisCO catalyzes two reactions: the carboxylation of D-ribulose 1,5-bisphosphate, the primary event in carbon dioxide fixation, as well as the oxidative fragmentation of the pentose substrate in the photorespiration process. Both reactions occur simultaneously and in competition at the same active site. The chain is Ribulose bisphosphate carboxylase large chain (rbcL) from Calyptrosphaera sphaeroidea.